Reading from the N-terminus, the 427-residue chain is 4-hydroxy-3-methylbut-2-en-1-yl diphosphate synthase (flavodoxin) (427 aa).

Residues 1–21 are disordered; that stretch reads MNKLENTIDSDIAGPAPRHRT. Residues C310, C313, C356, and E363 each coordinate [4Fe-4S] cluster.

Belongs to the IspG family. The cofactor is [4Fe-4S] cluster.

It carries out the reaction (2E)-4-hydroxy-3-methylbut-2-enyl diphosphate + oxidized [flavodoxin] + H2O + 2 H(+) = 2-C-methyl-D-erythritol 2,4-cyclic diphosphate + reduced [flavodoxin]. It participates in isoprenoid biosynthesis; isopentenyl diphosphate biosynthesis via DXP pathway; isopentenyl diphosphate from 1-deoxy-D-xylulose 5-phosphate: step 5/6. Its function is as follows. Converts 2C-methyl-D-erythritol 2,4-cyclodiphosphate (ME-2,4cPP) into 1-hydroxy-2-methyl-2-(E)-butenyl 4-diphosphate. This is 4-hydroxy-3-methylbut-2-en-1-yl diphosphate synthase (flavodoxin) from Bradyrhizobium diazoefficiens (strain JCM 10833 / BCRC 13528 / IAM 13628 / NBRC 14792 / USDA 110).